Consider the following 315-residue polypeptide: tRNA pseudouridine synthase B (315 aa).

Residue His-42 participates in substrate binding. The Nucleophile role is filled by Asp-47. Tyr-75, Tyr-178, and Leu-199 together coordinate substrate.

This sequence belongs to the pseudouridine synthase TruB family. Type 1 subfamily.

It carries out the reaction uridine(55) in tRNA = pseudouridine(55) in tRNA. Responsible for synthesis of pseudouridine from uracil-55 in the psi GC loop of transfer RNAs. This chain is tRNA pseudouridine synthase B, found in Photorhabdus laumondii subsp. laumondii (strain DSM 15139 / CIP 105565 / TT01) (Photorhabdus luminescens subsp. laumondii).